Consider the following 274-residue polypeptide: 2,3,4,5-tetrahydropyridine-2,6-dicarboxylate N-succinyltransferase (274 aa).

2 residues coordinate substrate: Arg103 and Asp140.

Belongs to the transferase hexapeptide repeat family. As to quaternary structure, homotrimer.

The protein resides in the cytoplasm. The catalysed reaction is (S)-2,3,4,5-tetrahydrodipicolinate + succinyl-CoA + H2O = (S)-2-succinylamino-6-oxoheptanedioate + CoA. The protein operates within amino-acid biosynthesis; L-lysine biosynthesis via DAP pathway; LL-2,6-diaminopimelate from (S)-tetrahydrodipicolinate (succinylase route): step 1/3. The chain is 2,3,4,5-tetrahydropyridine-2,6-dicarboxylate N-succinyltransferase from Haemophilus ducreyi (strain 35000HP / ATCC 700724).